The sequence spans 193 residues: MSFLWDWFNGVLNMLGLANKKGKLVFLGLDNAGKTTLLHMLKDDRIAQHVPTLHPTSEQMSLGGISFTTYDLGGHAQARRVWKDYFPAVDAVVFLIDVADAERMQESRVELESLLQDEQIASVPVLILGNKIDKPGALSEDQLKWQLNIQHMCTGKGDVSRNEMASRPMEVFMCSVLQRQGYGEGIRWLGQYL.

The STAR; SAR1-N-terminal activation recruitment. Required for the activation and subsequent recruitment to ER membrane signature appears at 3–5; sequence FLW. The interval 11–15 is mediates recruitment to ER membranes; that stretch reads VLNML. Aspartate 30 provides a ligand contact to Mg(2+). Positions 31, 32, 33, 34, 35, and 36 each coordinate GDP. Residue asparagine 31 participates in GTP binding. Glycine 33, lysine 34, threonine 35, and threonine 36 together coordinate GTP. Aspartate 71 is a Mg(2+) binding site. GDP-binding residues include asparagine 130, lysine 131, aspartate 133, valine 176, and leucine 177. GTP is bound by residues asparagine 130, lysine 131, aspartate 133, valine 176, and leucine 177.

Belongs to the small GTPase superfamily. SAR1 family. As to quaternary structure, homodimer; upon association with membrane. Part of the coat protein complex II/COPII, composed of SEC23/24 and SEC13/31 heterodimers, that it helps recruit and assemble on endoplasmic reticulum (ER) membranes at ER exit sites.

It localises to the endoplasmic reticulum membrane. The protein localises to the golgi apparatus. The protein resides in the golgi stack membrane. Its subcellular location is the cytoplasm. It is found in the cytosol. It carries out the reaction GTP + H2O = GDP + phosphate + H(+). Its activity is regulated as follows. Small GTPases activation is mediated by guanine exchange factors (GEF), while inactivation through hydrolysis of the bound GTP is stimulated by GTPase activating proteins (GAP). In terms of biological role, small GTPase that cycles between an active GTP-bound and an inactive GDP-bound state and mainly functions in vesicle-mediated endoplasmic reticulum (ER) to Golgi transport. The active GTP-bound form inserts into the endoplasmic reticulum membrane where it recruits the remainder of the coat protein complex II/COPII. The coat protein complex II assembling and polymerizing on endoplasmic reticulum membrane is responsible for both the sorting of cargos and the deformation and budding of membranes into vesicles destined to the Golgi. Plays a role in transporting the tyrosine kinase receptor let-23 from the endoplasmic reticulum to the plasma membrane of vulval precursor cells. The sequence is that of Small COPII coat GTPase SAR1 from Caenorhabditis elegans.